Reading from the N-terminus, the 541-residue chain is Chaperonin GroEL (541 aa).

ATP-binding positions include 29 to 32 (TAGP), Lys-50, 86 to 90 (DGTTT), Gly-416, and Asp-498.

Belongs to the chaperonin (HSP60) family. In terms of assembly, forms a cylinder of 14 subunits composed of two heptameric rings stacked back-to-back. Interacts with the co-chaperonin GroES.

The protein localises to the cytoplasm. It carries out the reaction ATP + H2O + a folded polypeptide = ADP + phosphate + an unfolded polypeptide.. In terms of biological role, together with its co-chaperonin GroES, plays an essential role in assisting protein folding. The GroEL-GroES system forms a nano-cage that allows encapsulation of the non-native substrate proteins and provides a physical environment optimized to promote and accelerate protein folding. The sequence is that of Chaperonin GroEL from Anaplasma phagocytophilum (Ehrlichia phagocytophila).